The sequence spans 250 residues: Superoxide dismutase 1 copper chaperone (250 aa).

The region spanning 4–67 is the HMA domain; sequence SFEIVFAVPM…AIQSTGKDAI (64 aa). Residues Cys15, Cys18, Cys229, and Cys231 each contribute to the Cu cation site.

The protein belongs to the CCS1 family. Requires Cu(2+) as cofactor.

The protein localises to the cytoplasm. Its function is as follows. Copper chaperone for superoxide dismutase 1 (SOD1). Binds copper ions and delivers them specifically to SOD1. The protein is Superoxide dismutase 1 copper chaperone (CCS1) of Debaryomyces hansenii (strain ATCC 36239 / CBS 767 / BCRC 21394 / JCM 1990 / NBRC 0083 / IGC 2968) (Yeast).